The following is a 436-amino-acid chain: DNA primase DnaG (436 aa).

The Toprim domain maps to Asp-169 to Tyr-243. The Mg(2+) site is built by Glu-175, Asp-217, and Asp-219.

It belongs to the archaeal DnaG primase family. In terms of assembly, forms a ternary complex with MCM helicase and DNA. The cofactor is Mg(2+).

The enzyme catalyses ssDNA + n NTP = ssDNA/pppN(pN)n-1 hybrid + (n-1) diphosphate.. RNA polymerase that catalyzes the synthesis of short RNA molecules used as primers for DNA polymerase during DNA replication. The polypeptide is DNA primase DnaG (Methanococcus maripaludis (strain DSM 14266 / JCM 13030 / NBRC 101832 / S2 / LL)).